Consider the following 680-residue polypeptide: Oligopeptidase A (680 aa).

Residue His-469 participates in Zn(2+) binding. Residue Glu-470 is part of the active site. Residues His-473 and His-476 each contribute to the Zn(2+) site.

It belongs to the peptidase M3 family. The cofactor is Zn(2+).

The enzyme catalyses Hydrolysis of oligopeptides, with broad specificity. Gly or Ala commonly occur as P1 or P1' residues, but more distant residues are also important, as is shown by the fact that Z-Gly-Pro-Gly-|-Gly-Pro-Ala is cleaved, but not Z-(Gly)(5).. Functionally, may play a specific role in the degradation of signal peptides after they are released from precursor forms of secreted proteins. Can cleave N-acetyl-L-Ala(4). The protein is Oligopeptidase A (prlC) of Escherichia coli (strain K12).